Reading from the N-terminus, the 344-residue chain is Dihydroorotase (344 aa).

Positions 13 and 15 each coordinate Zn(2+). Residues 15-17 and asparagine 41 contribute to the substrate site; that span reads HVR. Zn(2+) contacts are provided by lysine 99, histidine 136, and histidine 174. Lysine 99 bears the N6-carboxylysine mark. A substrate-binding site is contributed by histidine 136. Leucine 219 is a binding site for substrate. Aspartate 247 is a binding site for Zn(2+). The active site involves aspartate 247. Substrate is bound by residues histidine 251 and alanine 263.

This sequence belongs to the metallo-dependent hydrolases superfamily. DHOase family. Class II DHOase subfamily. As to quaternary structure, homodimer. The cofactor is Zn(2+).

The enzyme catalyses (S)-dihydroorotate + H2O = N-carbamoyl-L-aspartate + H(+). It participates in pyrimidine metabolism; UMP biosynthesis via de novo pathway; (S)-dihydroorotate from bicarbonate: step 3/3. In terms of biological role, catalyzes the reversible cyclization of carbamoyl aspartate to dihydroorotate. This Azoarcus sp. (strain BH72) protein is Dihydroorotase.